Consider the following 107-residue polypeptide: Iron-sulfur cluster assembly protein CyaY (107 aa).

It belongs to the frataxin family.

Involved in iron-sulfur (Fe-S) cluster assembly. May act as a regulator of Fe-S biogenesis. This chain is Iron-sulfur cluster assembly protein CyaY, found in Neisseria meningitidis serogroup A / serotype 4A (strain DSM 15465 / Z2491).